The following is a 101-amino-acid chain: Pore-forming peptide amoebapore C (101 aa).

The signal sequence occupies residues 1–24; sequence MKLFVLLCVFVLCLASQEKQQDRE. Residues 25-101 form the Saposin B-type domain; that stretch reads IPVLCPVCTS…KLICGLIHAC (77 aa). Intrachain disulfides connect Cys29–Cys101, Cys32–Cys95, and Cys59–Cys70.

Monomer. Homodimer. Hexamer; formed during insertion in the membrane.

It localises to the cytoplasmic granule. Its function is as follows. Forms pores in the cell membrane of host cells. Has antibacterial activity against M.luteus, no activity against E.coli. Implicated in the cytolytic activity of the parasite. The polypeptide is Pore-forming peptide amoebapore C (Entamoeba histolytica (strain ATCC 30459 / HM-1:IMSS / ABRM)).